The chain runs to 481 residues: Probable cytosol aminopeptidase (481 aa).

Mn(2+)-binding residues include K247 and D252. K259 is a catalytic residue. Mn(2+) contacts are provided by D270, D329, and E331. R333 is an active-site residue.

The protein belongs to the peptidase M17 family. Requires Mn(2+) as cofactor.

Its subcellular location is the cytoplasm. The catalysed reaction is Release of an N-terminal amino acid, Xaa-|-Yaa-, in which Xaa is preferably Leu, but may be other amino acids including Pro although not Arg or Lys, and Yaa may be Pro. Amino acid amides and methyl esters are also readily hydrolyzed, but rates on arylamides are exceedingly low.. It carries out the reaction Release of an N-terminal amino acid, preferentially leucine, but not glutamic or aspartic acids.. Functionally, presumably involved in the processing and regular turnover of intracellular proteins. Catalyzes the removal of unsubstituted N-terminal amino acids from various peptides. This Clostridium tetani (strain Massachusetts / E88) protein is Probable cytosol aminopeptidase.